The primary structure comprises 166 residues: 3-isopropylmalate dehydratase small subunit 2 (166 aa).

This sequence belongs to the LeuD family. LeuD type 2 subfamily. Heterodimer of LeuC and LeuD.

It catalyses the reaction (2R,3S)-3-isopropylmalate = (2S)-2-isopropylmalate. It participates in amino-acid biosynthesis; L-leucine biosynthesis; L-leucine from 3-methyl-2-oxobutanoate: step 2/4. Catalyzes the isomerization between 2-isopropylmalate and 3-isopropylmalate, via the formation of 2-isopropylmaleate. The chain is 3-isopropylmalate dehydratase small subunit 2 (leuD2) from Thermotoga maritima (strain ATCC 43589 / DSM 3109 / JCM 10099 / NBRC 100826 / MSB8).